The sequence spans 498 residues: Histidine--tRNA ligase (498 aa).

It belongs to the class-II aminoacyl-tRNA synthetase family. Homodimer.

The protein resides in the cytoplasm. It catalyses the reaction tRNA(His) + L-histidine + ATP = L-histidyl-tRNA(His) + AMP + diphosphate + H(+). The polypeptide is Histidine--tRNA ligase (Mycoplasmopsis synoviae (strain 53) (Mycoplasma synoviae)).